We begin with the raw amino-acid sequence, 285 residues long: Polyamine aminopropyltransferase (285 aa).

In terms of domain architecture, PABS spans 5–241 (QDWFTESYPD…GWWSATMAGK (237 aa)). Glutamine 35 contributes to the S-methyl-5'-thioadenosine binding site. 2 residues coordinate spermidine: histidine 66 and aspartate 90. S-methyl-5'-thioadenosine is bound by residues aspartate 110 and 141–142 (DG). The active-site Proton acceptor is aspartate 160. 160–163 (DSTD) is a spermidine binding site. Proline 167 provides a ligand contact to S-methyl-5'-thioadenosine.

This sequence belongs to the spermidine/spermine synthase family. In terms of assembly, homodimer or homotetramer.

Its subcellular location is the cytoplasm. It catalyses the reaction S-adenosyl 3-(methylsulfanyl)propylamine + putrescine = S-methyl-5'-thioadenosine + spermidine + H(+). The protein operates within amine and polyamine biosynthesis; spermidine biosynthesis; spermidine from putrescine: step 1/1. Catalyzes the irreversible transfer of a propylamine group from the amino donor S-adenosylmethioninamine (decarboxy-AdoMet) to putrescine (1,4-diaminobutane) to yield spermidine. This chain is Polyamine aminopropyltransferase, found in Methylococcus capsulatus (strain ATCC 33009 / NCIMB 11132 / Bath).